The sequence spans 388 residues: Leucine aminopeptidase 1 (388 aa).

Positions Met1–Ala19 are cleaved as a signal peptide. A propeptide spanning residues Ala20–Val88 is cleaved from the precursor. Residues Asn106 and Asn180 are each glycosylated (N-linked (GlcNAc...) asparagine). His188 and Asp207 together coordinate Zn(2+). An N-linked (GlcNAc...) asparagine glycan is attached at Asn232. 2 residues coordinate Zn(2+): Glu246 and Asp273. Cys322 and Cys326 are oxidised to a cystine. Zn(2+) is bound at residue His355.

This sequence belongs to the peptidase M28 family. M28E subfamily. Monomer. The cofactor is Zn(2+).

The protein resides in the secreted. Its function is as follows. Extracellular aminopeptidase that allows assimilation of proteinaceous substrates. In Aspergillus clavatus (strain ATCC 1007 / CBS 513.65 / DSM 816 / NCTC 3887 / NRRL 1 / QM 1276 / 107), this protein is Leucine aminopeptidase 1 (lap1).